The chain runs to 269 residues: UPF0761 membrane protein HI_0276 (269 aa).

The next 6 membrane-spanning stretches (helical) occupy residues 32–52 (MLAM…FPVF), 89–109 (MSAV…NNID), 128–148 (FAIY…SIGI), 168–188 (LLSF…YTVV), 203–223 (FLAA…IVTF), and 232–252 (AMAT…VVLV).

Belongs to the UPF0761 family.

The protein resides in the cell inner membrane. In Haemophilus influenzae (strain ATCC 51907 / DSM 11121 / KW20 / Rd), this protein is UPF0761 membrane protein HI_0276.